Reading from the N-terminus, the 203-residue chain is Xrcc4-like factor 1 (203 aa).

It belongs to the XRCC4-XLF family. XLF subfamily.

It is found in the nucleus. Functionally, involved in double-strand break repair via non-homologous end joining (NHEJ); the repair of a double-strand break in DNA in which the two broken ends are rejoined with little or no sequence complementarity. Has a role in meiosis. The sequence is that of Xrcc4-like factor 1 (xlf1) from Schizosaccharomyces pombe (strain 972 / ATCC 24843) (Fission yeast).